The following is a 297-amino-acid chain: Cyclin-dependent kinase 1 (297 aa).

Residues 4-287 (FEKIEKIGEG…AKDILEHPYF (284 aa)) form the Protein kinase domain. Residues 10 to 18 (IGEGTYGVV) and Lys-33 each bind ATP. Thr-14 carries the phosphothreonine modification. Tyr-15 carries the phosphotyrosine modification. Asp-128 functions as the Proton acceptor in the catalytic mechanism. Tyr-160 is subject to Phosphotyrosine. Thr-161 is modified (phosphothreonine; by CAK).

This sequence belongs to the protein kinase superfamily. CMGC Ser/Thr protein kinase family. CDC2/CDKX subfamily. In terms of assembly, forms a stable but non-covalent complex with a regulatory subunit and with a cyclin. Component of the Frs-CycA-Cdk1 complex composed of Cdk1, CycA and Z600.

The protein resides in the nucleus. The catalysed reaction is L-seryl-[protein] + ATP = O-phospho-L-seryl-[protein] + ADP + H(+). It catalyses the reaction L-threonyl-[protein] + ATP = O-phospho-L-threonyl-[protein] + ADP + H(+). The enzyme catalyses [DNA-directed RNA polymerase] + ATP = phospho-[DNA-directed RNA polymerase] + ADP + H(+). Phosphorylation at Thr-14 or Tyr-15 inactivates the enzyme, while phosphorylation at Thr-161 activates it. Functionally, plays a key role in the control of the eukaryotic cell cycle. Required for entry into S-phase and mitosis. In embryos, promotes the release of Rif1 from chromatin during mid-blastula transition. p34 is a component of the kinase complex that phosphorylates the repetitive C-terminus of RNA polymerase II. In Drosophila melanogaster (Fruit fly), this protein is Cyclin-dependent kinase 1.